Reading from the N-terminus, the 530-residue chain is Histone-arginine methyltransferase CARMER (530 aa).

Positions Ala-141 to His-450 constitute an SAM-dependent MTase PRMT-type domain. Residues Gln-154, Arg-163, Gly-187, Glu-209, Glu-238, and Thr-266 each contribute to the S-adenosyl-L-methionine site. Arg-501 bears the Asymmetric dimethylarginine; by autocatalysis mark.

It belongs to the class I-like SAM-binding methyltransferase superfamily. Protein arginine N-methyltransferase family. Homodimer. In terms of processing, the dimethylated protein is the major form.

The protein localises to the cytoplasm. It localises to the nucleus. The enzyme catalyses L-arginyl-[protein] + 2 S-adenosyl-L-methionine = N(omega),N(omega)-dimethyl-L-arginyl-[protein] + 2 S-adenosyl-L-homocysteine + 2 H(+). Its function is as follows. Methylates (mono- and asymmetric dimethylation) the guanidino nitrogens of arginyl residues in proteins. May methylate histone H3 at 'Arg-17' and activate transcription via chromatin remodeling. This chain is Histone-arginine methyltransferase CARMER (Art4), found in Drosophila yakuba (Fruit fly).